Reading from the N-terminus, the 243-residue chain is Probable fructoselysine utilization operon transcriptional repressor (243 aa).

One can recognise an HTH gntR-type domain in the interval 10 to 78; the sequence is QLLYATVRQR…QGKGTFVQSQ (69 aa). The segment at residues 38–57 is a DNA-binding region (H-T-H motif); that stretch reads ENELCTQYNVSRITIRKAIS.

It participates in carbohydrate metabolism; fructoselysine degradation [regulation]. Functionally, may regulate the transcription of the frlABCDR operon, involved in the utilization of fructoselysine and psicoselysine. The sequence is that of Probable fructoselysine utilization operon transcriptional repressor (frlR) from Shigella flexneri.